We begin with the raw amino-acid sequence, 473 residues long: Hyaluronidase-2 (473 aa).

The N-terminal stretch at M1–A20 is a signal peptide. Cystine bridges form between C47/C340 and C211/C227. N-linked (GlcNAc...) asparagine glycans are attached at residues N74 and N103. The active-site Proton donor is the E135. N-linked (GlcNAc...) asparagine glycosylation occurs at N357. An EGF-like domain is found at A361–Q439. 3 cysteine pairs are disulfide-bonded: C365/C376, C370/C427, and C429/C438. The GPI-anchor amidated aspartate moiety is linked to residue D448. The propeptide at A449 to L473 is removed in mature form.

It belongs to the glycosyl hydrolase 56 family. As to quaternary structure, interacts with MST1R.

It is found in the cell membrane. The catalysed reaction is Random hydrolysis of (1-&gt;4)-linkages between N-acetyl-beta-D-glucosamine and D-glucuronate residues in hyaluronate.. Functionally, catalyzes hyaluronan degradation into small fragments that are endocytosed and degraded in lysosomes by HYAL1 and exoglycosidases. Essential for the breakdown of extracellular matrix hyaluronan. This chain is Hyaluronidase-2 (Hyal2), found in Rattus norvegicus (Rat).